The following is a 684-amino-acid chain: Rabphilin-3A (684 aa).

A disordered region spans residues 1–21 (MTDTVVNRWMYPGDGPLQSND). The 118-residue stretch at 40–157 (QRKQEELTDE…KRSGAWFFKG (118 aa)) folds into the RabBD domain. An FYVE-type zinc finger spans residues 88-145 (GDGVNRCILCGEQLGMLGSACVVCEDCKKNVCTKCGVETSNNRPHPVWLCKICLEQRE). Zn(2+) is bound by residues Cys94, Cys97, Cys111, Cys114, Cys119, Cys122, Cys137, and Cys140. Residues 162–377 (VLPQPMPIKK…EEEEANSYDS (216 aa)) are disordered. Residues 199–208 (ARGDMEDRRA) show a composition bias toward basic and acidic residues. Residue Arg223 is modified to Omega-N-methylarginine. Basic and acidic residues predominate over residues 243 to 252 (RDSEGWDHGH). Ser274 bears the Phosphoserine mark. Residues 283-299 (ASMPSPAPPQPVQPGPP) show a composition bias toward pro residues. The segment covering 301 to 310 (GSRAAPGPGR) has biased composition (low complexity). Residues 382–504 (TLGALEFSLL…KANQRKNFNI (123 aa)) enclose the C2 1 domain. Ca(2+)-binding residues include Met412, Asp413, Asp419, Asp474, Glu475, Asp476, Glu482, Glu529, Asp571, Asp577, Asp631, Tyr632, Asp633, and Asp639. In terms of domain architecture, C2 2 spans 540-673 (ERGKILVSLM…NKDKKIERWH (134 aa)). Residues Ser682 and Ser683 each carry the phosphoserine modification.

Interacts with RAB3B, RAB3C, RAB3D, RAB8A, RAB27A and RAB27B. Interacts with RAB3A; this interaction recruits RPH3A to synaptic vesicules. Interacts (via C2B domain) with SNAP25. Interacts with deubiquitinating enzyme CAND1; this interaction results in the deubiquitination of RPH3A. Interacts with GRIN2A and DLG4; this ternary complex regulates NMDA receptor composition at postsynaptic membranes. Interacts with SNCA. The cofactor is Ca(2+). Post-translationally, ubiquitinated. Deubiquitinated by CAND1 to prevent its degradation. In terms of tissue distribution, specifically expressed in brain.

It is found in the cytoplasmic vesicle. It localises to the secretory vesicle. Its subcellular location is the synaptic vesicle membrane. The protein resides in the cell projection. The protein localises to the dendritic spine. It is found in the postsynaptic cell membrane. It localises to the membrane. Plays an essential role in docking and fusion steps of regulated exocytosis. At the presynaptic level, RPH3A is recruited by RAB3A to the synaptic vesicle membrane in a GTP-dependent manner where it modulates synaptic vesicle trafficking and calcium-triggered neurotransmitter release. In the post-synaptic compartment, forms a ternary complex with GRIN2A and DLG4 and regulates NMDA receptor stability. Also plays a role in the exocytosis of arginine vasopressin hormone. The polypeptide is Rabphilin-3A (Rph3a) (Rattus norvegicus (Rat)).